The primary structure comprises 254 residues: Ribosomal RNA small subunit methyltransferase G (254 aa).

Residues Gly92, 143–144 (AE), and Arg156 each bind S-adenosyl-L-methionine.

Belongs to the methyltransferase superfamily. RNA methyltransferase RsmG family.

It localises to the cytoplasm. Its function is as follows. Specifically methylates the N7 position of a guanine in 16S rRNA. In Leptospira interrogans serogroup Icterohaemorrhagiae serovar copenhageni (strain Fiocruz L1-130), this protein is Ribosomal RNA small subunit methyltransferase G.